Consider the following 88-residue polypeptide: Arminin 1b (88 aa).

The signal sequence occupies residues 1–18 (MKTVLAFLFLTFIAFTHA). Positions 19 to 57 (ESYEDVKEEIKNEVEREIFEDLEEESDVLESNVRELNDA) are excised as a propeptide. Position 85 is a valine amide (valine 85).

It belongs to the arminin family. As to expression, expressed in entodermal epithelium along the body column.

The protein localises to the secreted. Its subcellular location is the target cell membrane. In terms of biological role, antimicrobial peptide with a broad-spectrum antimicrobial activity. Keeps its antibacterial activity under a wide range of salt concentrations that mimic physiological conditions of human blood, which is surprising, since Hydra is an obligate freshwater animal with nearly no salt tolerance. Does not affect red blood cells. This is Arminin 1b from Hydra vulgaris (Hydra).